The chain runs to 365 residues: Tetratricopeptide repeat protein 19, mitochondrial (365 aa).

The N-terminal 52 residues, 1-52, are a transit peptide targeting the mitochondrion; it reads MFRLLRWRLGRTLLRAAGRRCGGCTARLLPERTGDAGTGAERLRTRGAPARG. TPR repeat units lie at residues 127–160, 220–260, 269–302, and 308–341; these read TYTY…LLGG, ANTY…CQEI, IVLM…AREI, and HMVL…AELK.

The protein belongs to the TTC19 family. Binds to the mature mitochondrial complex III dimer, after the incorporation of the Rieske protein UQCRFS1. Interacts with UQCRC1 and UQCRFS1. Interacts with ZFYVE26 and CHMP4B. In terms of processing, proteolytically cleaved by PARL.

It localises to the mitochondrion inner membrane. Required for the preservation of the structural and functional integrity of mitochondrial respiratory complex III by allowing the physiological turnover of the Rieske protein UQCRFS1. Involved in the clearance of UQCRFS1 N-terminal fragments, which are produced upon incorporation into the complex III and whose presence is detrimental for its catalytic activity. The polypeptide is Tetratricopeptide repeat protein 19, mitochondrial (Ttc19) (Mus musculus (Mouse)).